The primary structure comprises 1050 residues: uncharacterized protein (1050 aa).

Coiled-coil stretches lie at residues 1-420 (MEKV…TAKM), 463-627 (YSLL…IREL), and 692-981 (NDSK…NLLS).

This is an uncharacterized protein from Arabidopsis thaliana (Mouse-ear cress).